Here is a 196-residue protein sequence, read N- to C-terminus: uncharacterized protein (196 aa).

2 CBS domains span residues 10–69 (ARRD…NPDE) and 76–132 (MSQP…LVAT). Residues 153–187 (IIEGVCDLCETYSEELRFVDGVWVCPECYEDILGR) enclose the ACP-type MB domain. Positions 158, 161, 177, and 180 each coordinate Fe cation. Zn(2+)-binding residues include Cys158, Cys161, Cys177, and Cys180.

This is an uncharacterized protein from Methanopyrus kandleri (strain AV19 / DSM 6324 / JCM 9639 / NBRC 100938).